A 230-amino-acid chain; its full sequence is MNELVDTTEMYLRTIYDLEEEGVTPLRARIAERLDQSGPTVSQTVSRMERDGLLRVAGDRHLELTEKGRALAIAVMRKHRLAERLLVDVIGLPWEEVHAEACRWEHVMSEDVERRLVKVLNNPTTSPFGNPIPGLVELGVGPEPGADDANLVRLTELPAGSPVAVVVRQLTEHVQGDIDLITRLKDAGVVPNARVTVETTPGGGVTIVIPGHENVTLPHEMAHAVKVEKV.

In terms of domain architecture, HTH dtxR-type spans 4–65 (LVDTTEMYLR…VAGDRHLELT (62 aa)).

This sequence belongs to the DtxR/MntR family. In terms of assembly, homodimer.

The protein localises to the cytoplasm. Functionally, metal-dependent DNA-binding protein that controls transcription of many genes involved in iron metabolism. The chain is Iron-dependent repressor IdeR (ideR) from Mycobacterium bovis (strain ATCC BAA-935 / AF2122/97).